We begin with the raw amino-acid sequence, 246 residues long: MTHAYFFKFGYIGYMFTGYQRGNGVKSVEDTIIKALNLNSPSLIKTAARTDRGVSALSNVFYIETERRPQDIAGIINSKNEYVFVHSFAEVEHGRNPRYCDTKTYMYMLPGETECDSLMVTASGFLGFHDFSKFSKKDTRNPWRSIDEVKCHRESFGVVLEFSAKSFLWNQVRRMLAFILEFRGNKIDPFSVSNIYSHIAPPENLILKDIVYKDLSFKPLNNGLKRQRLMMEKSLISYIVLKNVLG.

Catalysis depends on aspartate 51, which acts as the Nucleophile. Tyrosine 105 provides a ligand contact to substrate.

This sequence belongs to the tRNA pseudouridine synthase TruA family.

The catalysed reaction is uridine(38/39/40) in tRNA = pseudouridine(38/39/40) in tRNA. In terms of biological role, formation of pseudouridine at positions 38, 39 and 40 in the anticodon stem and loop of transfer RNAs. In Thermoplasma volcanium (strain ATCC 51530 / DSM 4299 / JCM 9571 / NBRC 15438 / GSS1), this protein is tRNA pseudouridine synthase A.